We begin with the raw amino-acid sequence, 122 residues long: MIQQETRLHVADNTGAKELLAIRVLGGSKRRYAGIGDVIVASVKDAIPGGSVKKGDVVKAVVVRTVKEHRRVDGSYIKFDENAAVILGSGREPKGTRIFGPVGRELRDKRFMKIVSLAPEVI.

This sequence belongs to the universal ribosomal protein uL14 family. As to quaternary structure, part of the 50S ribosomal subunit. Forms a cluster with proteins L3 and L19. In the 70S ribosome, L14 and L19 interact and together make contacts with the 16S rRNA in bridges B5 and B8.

Functionally, binds to 23S rRNA. Forms part of two intersubunit bridges in the 70S ribosome. This Bifidobacterium adolescentis (strain ATCC 15703 / DSM 20083 / NCTC 11814 / E194a) protein is Large ribosomal subunit protein uL14.